The following is a 158-amino-acid chain: NAD(P)H-quinone oxidoreductase subunit J, chloroplastic (158 aa).

It belongs to the complex I 30 kDa subunit family. In terms of assembly, NDH is composed of at least 16 different subunits, 5 of which are encoded in the nucleus.

The protein resides in the plastid. It is found in the chloroplast thylakoid membrane. It catalyses the reaction a plastoquinone + NADH + (n+1) H(+)(in) = a plastoquinol + NAD(+) + n H(+)(out). It carries out the reaction a plastoquinone + NADPH + (n+1) H(+)(in) = a plastoquinol + NADP(+) + n H(+)(out). Functionally, NDH shuttles electrons from NAD(P)H:plastoquinone, via FMN and iron-sulfur (Fe-S) centers, to quinones in the photosynthetic chain and possibly in a chloroplast respiratory chain. The immediate electron acceptor for the enzyme in this species is believed to be plastoquinone. Couples the redox reaction to proton translocation, and thus conserves the redox energy in a proton gradient. The polypeptide is NAD(P)H-quinone oxidoreductase subunit J, chloroplastic (Spinacia oleracea (Spinach)).